Reading from the N-terminus, the 183-residue chain is MKSIYITGYKPYELNIFNNKQPEVRYIKLFLQQKLKEYIEDGLEWVIIEGQLGVELWAAEVVIRLKKMYDVKLSIITPFLEHHSKWNEENQLYYNQICARADFITSAHNDIYRGGFQFRNTDQFVLDNTEGTILFYDDEHEASPKFFKQTLIDFASENQYNIDVVTLEDLSDFVNEYMRAKEY.

This sequence belongs to the UPF0398 family.

The polypeptide is UPF0398 protein MCCL_1095 (Macrococcus caseolyticus (strain JCSC5402) (Macrococcoides caseolyticum)).